The chain runs to 76 residues: Omega-conotoxin-like TxMKLT1-0211 (76 aa).

The N-terminal stretch at 1–22 (MKLTCMMIVAVLFLTAWTFVTA) is a signal peptide. Positions 23 to 52 (VPHSSNALENLYLKAHHEMNNPEDSELNKR) are excised as a propeptide. 3 cysteine pairs are disulfide-bonded: C53/C67, C60/C71, and C66/C75.

The protein belongs to the conotoxin O1 superfamily. As to expression, expressed by the venom duct.

Its subcellular location is the secreted. Omega-conotoxins act at presynaptic membranes, they bind and block voltage-gated calcium channels (Cav). In Conus textile (Cloth-of-gold cone), this protein is Omega-conotoxin-like TxMKLT1-0211.